A 1457-amino-acid polypeptide reads, in one-letter code: MAGIIKKQILKHLSRFTKNLSPDKINLSTLKGEGELKNLELDEEVLQNMLDLPTWLAISKVFCNKASIRIPWTKLKTQPICLSLDKVIMEMSTCEEPRAPNGPSPIATASGQSEYGFAEKVVEGITVSVNSIVIRIGAKAFNASFELSQLRIYSVNAQWEHGDLRFTRIQDPQRGEVLTFKEINWQMIRIEADATQSSHLEIMCAPVRLITNQSKIRVTLKRRLKDCNVIATKLVLILDDLLWVLTDSQLKAMVQYAKSLSEAIEKSTEQRKSMAPEPTQSSTVTSSAQHVKTPQAANAPDLSDAIVKLFNDFDVKETSHHLVISHLDLHICDDIHAKEKESNRRVSGGAMQLSFTQLTIDYYPYHKAGDSCSHWMYFSDATKTKNGWANELLHEFECNVEMLKQAMKDRNLGSPPKSPTHASPQHTQTEKDSTLKGTPKTPSVLPQPSKAKLMSSSVVVRLADFNIYQVSTAEQCRSSPKSMISCNKKSLYLPQEMSAIYIEFTEYYYPDGKDFPIPSPNLYSQLNALQFTVDERSILWLNQFLLDLKQSLNQFMAVYKLNDSSKSDEHVDIRVDGLMLKFVIPSEVKAGCHQDQPHTVSIQSSEMIATNTRHCPNCRHSDLEALCQDFKECDFFSKTYTRFPKSCDSFNLLHPIFQRHAHEQDTKMHEVYKGNIIPKLNKNTLKTSAATDVWAVYFSQFWIDYEGMKSGKGRPVSFVDAFPLSIWICQPTRYAELQKEFQTCDQVTLNTSQSESSDLAGRMKRKKLLKEYYSTESEPLTNGGQRPSSDTFLRFSSSSSDADVHVLVRVHKHVSMQINHYQYLLLLFIHESLVLLSDTLRRDVEAVIGSPASQTSVCVGILLRSAELALLLHPVNPTSALRSPASESGSPLLPDFLPAENGGFLSSKRKQGGSGIHRIRNATLNHMSDNRSMSVDLSHAPLKDPLLFKSASDTNLQKGTSFLDYLSDKHLGKISEDESSGLSHKSGSGEMTSEGSHTKDVASTDSDSVLNYRDGSTRLSLDDDGNHNPPSNPVTGKGIDAIHSIFRAEDFLPEAASLSENPESSKEEAPPARAPKSQTSLSAKSKERCPPSPAPLSVSYKNMKRSASQVSLDTLSLDSMVLEEQAESDGSDSHVLLGKAMKRNSNTSCQSPAESVNTSANTQTCGEASPEAVSTNSEGTQENRDDLMSVVVFRITGVNGEIDIRGEDTEVCLQVNQVTPSQLGNVSLRHYLGNRPVGSDQKAIIHPKSSPEISLRFESGPGAVVHSLLAEKNGFLQCHIENFTTEFLTSSLLNIQHFLEDETVATVMPMKIQVSNTKINLKDDSPRGSTVSLQPSPVTVHIDRLVVERSDDGSFHIRDSHLFNTGTDFKDGASSDSVVRTRGMCDVRMHSSVTQATQTSPEVPLPSQSANFLDITREQLMEENECLRQRLAQAKMELAEAHSARDELLHQMKRMGL.

In terms of domain architecture, Chorein N-terminal spans 3–94 (GIIKKQILKH…DKVIMEMSTC (92 aa)). Disordered stretches follow at residues 267–295 (STEQ…KTPQ) and 409–449 (DRNL…PQPS). Over residues 278-295 (PTQSSTVTSSAQHVKTPQ) the composition is skewed to polar residues. Phosphoserine occurs at positions 414, 418, 774, and 934. 3 disordered regions span residues 975 to 1038 (SEDE…TGKG), 1056 to 1099 (ASLS…LSVS), and 1145 to 1183 (SNTS…TQEN). The span at 980 to 995 (SGLSHKSGSGEMTSEG) shows a compositional bias: polar residues. Position 1008 is a phosphoserine (Ser1008). The segment covering 1145-1180 (SNTSCQSPAESVNTSANTQTCGEASPEAVSTNSEGT) has biased composition (polar residues). Positions 1410–1455 (ANFLDITREQLMEENECLRQRLAQAKMELAEAHSARDELLHQMKRM) form a coiled coil.

As to quaternary structure, homodimer (via N-terminus). Associates with the Golgi-associated retrograde protein (GARP) complex. Interacts with GARP complex component VPS52. Interacts (via C-terminal coiled-coil domain) with STX6.

The protein resides in the cytoplasm. Its subcellular location is the cytosol. It localises to the early endosome. Functionally, tube-forming lipid transport protein which mediates the transfer of lipids between membranes at organelle contact sites. Required for retrograde traffic of vesicle clusters in the early endocytic pathway to the Golgi complex. This is Bridge-like lipid transfer protein family member 3B (Bltp3b) from Mus musculus (Mouse).